The primary structure comprises 330 residues: Growth hormone-regulated TBC protein 6 (330 aa).

The 179-residue stretch at 78–256 (GIPHTFRKEL…RLWDCLIYEG (179 aa)) folds into the Rab-GAP TBC domain.

This is Growth hormone-regulated TBC protein 6 (tbc-6) from Caenorhabditis elegans.